Here is a 162-residue protein sequence, read N- to C-terminus: Ecotin (162 aa).

The N-terminal stretch at 1–18 (MKMFVPAVVFAASASAWA) is a signal peptide. Cys70 and Cys107 are disulfide-bonded.

The protein belongs to the protease inhibitor I11 (ecotin) family. As to quaternary structure, homodimer.

The protein localises to the periplasm. General inhibitor of pancreatic serine proteases: inhibits chymotrypsin, trypsin, elastases, factor X, kallikrein as well as a variety of other proteases. The protein is Ecotin of Salmonella arizonae (strain ATCC BAA-731 / CDC346-86 / RSK2980).